Here is a 284-residue protein sequence, read N- to C-terminus: Polyamine aminopropyltransferase (284 aa).

Positions 2 to 237 (ELWYTEQHTE…GHWLFGFASK (236 aa)) constitute a PABS domain. Residue Q31 participates in S-methyl-5'-thioadenosine binding. Spermidine is bound by residues H62 and D86. S-methyl-5'-thioadenosine is bound by residues E106 and 137 to 138 (DG). D155 acts as the Proton acceptor in catalysis. Spermidine is bound at residue 155-158 (DSTD). P162 serves as a coordination point for S-methyl-5'-thioadenosine.

The protein belongs to the spermidine/spermine synthase family. As to quaternary structure, homodimer or homotetramer.

The protein resides in the cytoplasm. It catalyses the reaction S-adenosyl 3-(methylsulfanyl)propylamine + putrescine = S-methyl-5'-thioadenosine + spermidine + H(+). It functions in the pathway amine and polyamine biosynthesis; spermidine biosynthesis; spermidine from putrescine: step 1/1. Its function is as follows. Catalyzes the irreversible transfer of a propylamine group from the amino donor S-adenosylmethioninamine (decarboxy-AdoMet) to putrescine (1,4-diaminobutane) to yield spermidine. This chain is Polyamine aminopropyltransferase, found in Clostridium beijerinckii (strain ATCC 51743 / NCIMB 8052) (Clostridium acetobutylicum).